Consider the following 486-residue polypeptide: Glutamyl-tRNA(Gln) amidotransferase subunit A (486 aa).

Residues Lys74 and Ser149 each act as charge relay system in the active site. The active-site Acyl-ester intermediate is Ser173.

It belongs to the amidase family. GatA subfamily. As to quaternary structure, heterotrimer of A, B and C subunits.

It catalyses the reaction L-glutamyl-tRNA(Gln) + L-glutamine + ATP + H2O = L-glutaminyl-tRNA(Gln) + L-glutamate + ADP + phosphate + H(+). In terms of biological role, allows the formation of correctly charged Gln-tRNA(Gln) through the transamidation of misacylated Glu-tRNA(Gln) in organisms which lack glutaminyl-tRNA synthetase. The reaction takes place in the presence of glutamine and ATP through an activated gamma-phospho-Glu-tRNA(Gln). This is Glutamyl-tRNA(Gln) amidotransferase subunit A from Prochlorococcus marinus (strain MIT 9313).